Reading from the N-terminus, the 479-residue chain is BURP domain-containing protein 4 (479 aa).

An N-terminal signal peptide occupies residues 1 to 46 (MVGKGNECAAARRRFSLRAAAASSSSSSFLPCLLLAAALSAGCCRA). A disordered region spans residues 158 to 177 (RADGPPKQPATFPASPNGEK). The BURP domain maps to 254–479 (LFLMKKLHPG…PQGYVLWLAN (226 aa)). N-linked (GlcNAc...) asparagine glycosylation occurs at N445.

As to expression, expressed in stamen.

The protein is BURP domain-containing protein 4 (BURP4) of Oryza sativa subsp. japonica (Rice).